Here is a 345-residue protein sequence, read N- to C-terminus: D-fructose 1,6-bisphosphatase class 2/sedoheptulose 1,7-bisphosphatase (345 aa).

Mn(2+) is bound by residues D33, E57, D97, and E100. Residues E100–T102, Y131, R176–R178, and D198–D200 contribute to the substrate site. E225 is a binding site for Mn(2+).

The protein belongs to the FBPase class 2 family. Homotetramer. Mn(2+) is required as a cofactor.

It catalyses the reaction beta-D-fructose 1,6-bisphosphate + H2O = beta-D-fructose 6-phosphate + phosphate. It carries out the reaction D-sedoheptulose 1,7-bisphosphate + H2O = D-sedoheptulose 7-phosphate + phosphate. It functions in the pathway carbohydrate biosynthesis; Calvin cycle. Catalyzes the hydrolysis of fructose 1,6-bisphosphate (Fru 1,6-P2) and sedoheptulose 1,7-bisphosphate (Sed 1,7-P2) to fructose 6-phosphate and sedoheptulose 7-phosphate, respectively. This Trichormus variabilis (strain ATCC 29413 / PCC 7937) (Anabaena variabilis) protein is D-fructose 1,6-bisphosphatase class 2/sedoheptulose 1,7-bisphosphatase.